Here is a 284-residue protein sequence, read N- to C-terminus: Phosphoenolpyruvate guanylyltransferase (284 aa).

The interval 94-123 (ADLSADEPAGTDAERRADPSAENRASTSAQ) is disordered. Residues 105–114 (DAERRADPSA) show a composition bias toward basic and acidic residues. 3 residues coordinate phosphoenolpyruvate: T203, G219, and S222.

The protein belongs to the CofC family.

The enzyme catalyses phosphoenolpyruvate + GTP + H(+) = enolpyruvoyl-2-diphospho-5'-guanosine + diphosphate. The protein operates within cofactor biosynthesis; coenzyme F420 biosynthesis. In terms of biological role, guanylyltransferase that catalyzes the activation of phosphoenolpyruvate (PEP) as enolpyruvoyl-2-diphospho-5'-guanosine, via the condensation of PEP with GTP. It is involved in the biosynthesis of coenzyme F420, a hydride carrier cofactor. This chain is Phosphoenolpyruvate guanylyltransferase, found in Sanguibacter keddieii (strain ATCC 51767 / DSM 10542 / NCFB 3025 / ST-74).